The sequence spans 401 residues: 1-deoxy-D-xylulose 5-phosphate reductoisomerase (401 aa).

NADPH is bound by residues Thr11, Gly12, Ser13, Ile14, Arg38, Asn39, and Asn125. Lys126 serves as a coordination point for 1-deoxy-D-xylulose 5-phosphate. NADPH is bound at residue Glu127. Residue Asp151 participates in Mn(2+) binding. Residues Ser152, Glu153, Ser179, and His202 each coordinate 1-deoxy-D-xylulose 5-phosphate. Glu153 is a binding site for Mn(2+). Gly208 provides a ligand contact to NADPH. 1-deoxy-D-xylulose 5-phosphate is bound by residues Ser215, Asn220, Lys221, and Glu224. Glu224 serves as a coordination point for Mn(2+).

The protein belongs to the DXR family. Mg(2+) serves as cofactor. Requires Mn(2+) as cofactor.

The enzyme catalyses 2-C-methyl-D-erythritol 4-phosphate + NADP(+) = 1-deoxy-D-xylulose 5-phosphate + NADPH + H(+). It functions in the pathway isoprenoid biosynthesis; isopentenyl diphosphate biosynthesis via DXP pathway; isopentenyl diphosphate from 1-deoxy-D-xylulose 5-phosphate: step 1/6. Catalyzes the NADPH-dependent rearrangement and reduction of 1-deoxy-D-xylulose-5-phosphate (DXP) to 2-C-methyl-D-erythritol 4-phosphate (MEP). This is 1-deoxy-D-xylulose 5-phosphate reductoisomerase from Paraburkholderia phymatum (strain DSM 17167 / CIP 108236 / LMG 21445 / STM815) (Burkholderia phymatum).